Consider the following 669-residue polypeptide: DNA ligase (669 aa).

Residue 35–39 participates in NAD(+) binding; it reads DFEYD. The interval 52 to 71 is disordered; sequence YPEWDSPDSPTHRVGSDKTE. Over residues 61–71 the composition is skewed to basic and acidic residues; it reads PTHRVGSDKTE. Residues 84–85 and glutamate 115 contribute to the NAD(+) site; that span reads SL. Lysine 117 (N6-AMP-lysine intermediate) is an active-site residue. Residues arginine 138, glutamate 175, lysine 290, and lysine 314 each coordinate NAD(+). Zn(2+) is bound by residues cysteine 408, cysteine 411, cysteine 426, and cysteine 432. The region spanning 590–669 is the BRCT domain; that stretch reads AVSNRLAGKT…EEEFLRLIEE (80 aa).

This sequence belongs to the NAD-dependent DNA ligase family. LigA subfamily. It depends on Mg(2+) as a cofactor. The cofactor is Mn(2+).

The enzyme catalyses NAD(+) + (deoxyribonucleotide)n-3'-hydroxyl + 5'-phospho-(deoxyribonucleotide)m = (deoxyribonucleotide)n+m + AMP + beta-nicotinamide D-nucleotide.. In terms of biological role, DNA ligase that catalyzes the formation of phosphodiester linkages between 5'-phosphoryl and 3'-hydroxyl groups in double-stranded DNA using NAD as a coenzyme and as the energy source for the reaction. It is essential for DNA replication and repair of damaged DNA. The protein is DNA ligase of Porphyromonas gingivalis (strain ATCC BAA-308 / W83).